We begin with the raw amino-acid sequence, 435 residues long: ATP-dependent protease ATPase subunit HslU (435 aa).

ATP-binding positions include V18, 60-65 (GVGKTE), D248, E313, and R385.

Belongs to the ClpX chaperone family. HslU subfamily. In terms of assembly, a double ring-shaped homohexamer of HslV is capped on each side by a ring-shaped HslU homohexamer. The assembly of the HslU/HslV complex is dependent on binding of ATP.

It localises to the cytoplasm. ATPase subunit of a proteasome-like degradation complex; this subunit has chaperone activity. The binding of ATP and its subsequent hydrolysis by HslU are essential for unfolding of protein substrates subsequently hydrolyzed by HslV. HslU recognizes the N-terminal part of its protein substrates and unfolds these before they are guided to HslV for hydrolysis. The polypeptide is ATP-dependent protease ATPase subunit HslU (Parvibaculum lavamentivorans (strain DS-1 / DSM 13023 / NCIMB 13966)).